The chain runs to 446 residues: Glucosylglycerate hydrolase (446 aa).

Substrate is bound by residues tyrosine 36, 40-43, tyrosine 88, glutamine 115, and glycine 180; that span reads WSWD. The active-site Proton donor is the aspartate 182. Residues arginine 216 and 375–376 each bind substrate; that span reads YW. Glutamate 419 (proton acceptor) is an active-site residue. Glutamine 434 contributes to the substrate binding site.

This sequence belongs to the glycosyl hydrolase 63 family. As to quaternary structure, homotetramer. Dimer of dimers.

The enzyme catalyses (2R)-2-O-(alpha-D-glucopyranosyl)-glycerate + H2O = (R)-glycerate + D-glucose. Activity is not dependent on divalent cations, but it is enhanced by Mg(2+). In terms of biological role, catalyzes the hydrolysis of glucosylglycerate (GG) to glycerate and glucose. Involved in recovery from nitrogen starvation by promoting the rapid mobilization of the glucosylglycerate that accumulates under these conditions. Can also hydrolyze mannosylglycerate (MG), with tenfold lower efficiency. In Mycolicibacterium hassiacum (strain DSM 44199 / CIP 105218 / JCM 12690 / 3849) (Mycobacterium hassiacum), this protein is Glucosylglycerate hydrolase.